The primary structure comprises 414 residues: 2,3-bisphosphoglycerate-independent phosphoglycerate mutase (414 aa).

It belongs to the BPG-independent phosphoglycerate mutase family. A-PGAM subfamily.

It catalyses the reaction (2R)-2-phosphoglycerate = (2R)-3-phosphoglycerate. The protein operates within carbohydrate degradation; glycolysis; pyruvate from D-glyceraldehyde 3-phosphate: step 3/5. Catalyzes the interconversion of 2-phosphoglycerate and 3-phosphoglycerate. The polypeptide is 2,3-bisphosphoglycerate-independent phosphoglycerate mutase (Saccharolobus islandicus (strain L.S.2.15 / Lassen #1) (Sulfolobus islandicus)).